Reading from the N-terminus, the 279-residue chain is Ribonuclease Z (279 aa).

Zn(2+)-binding residues include H64, H66, D68, H69, H134, D191, and H245. The active-site Proton acceptor is the D68.

It belongs to the RNase Z family. In terms of assembly, homodimer. It depends on Zn(2+) as a cofactor.

The catalysed reaction is Endonucleolytic cleavage of RNA, removing extra 3' nucleotides from tRNA precursor, generating 3' termini of tRNAs. A 3'-hydroxy group is left at the tRNA terminus and a 5'-phosphoryl group is left at the trailer molecule.. Functionally, zinc phosphodiesterase, which displays some tRNA 3'-processing endonuclease activity. Probably involved in tRNA maturation, by removing a 3'-trailer from precursor tRNA. This Methanopyrus kandleri (strain AV19 / DSM 6324 / JCM 9639 / NBRC 100938) protein is Ribonuclease Z.